Here is a 153-residue protein sequence, read N- to C-terminus: H/ACA ribonucleoprotein complex subunit 2 (153 aa).

A Glycyl lysine isopeptide (Lys-Gly) (interchain with G-Cter in SUMO2) cross-link involves residue K3. K5 participates in a covalent cross-link: Glycyl lysine isopeptide (Lys-Gly) (interchain with G-Cter in SUMO); alternate. A Glycyl lysine isopeptide (Lys-Gly) (interchain with G-Cter in SUMO1); alternate cross-link involves residue K5. K5 is covalently cross-linked (Glycyl lysine isopeptide (Lys-Gly) (interchain with G-Cter in SUMO2); alternate).

The protein belongs to the eukaryotic ribosomal protein eL8 family. As to quaternary structure, part of the H/ACA small nucleolar ribonucleoprotein (H/ACA snoRNP) complex, which contains NHP2/NOLA2, GAR1/NOLA1, NOP10/NOLA3, and DKC1/NOLA4, which is presumed to be the catalytic subunit. The complex contains a stable core formed by binding of one or two NOP10-DKC1 heterodimers to NHP2; GAR1 subsequently binds to this core via DKC1. The complex binds a box H/ACA small nucleolar RNA (snoRNA), which may target the specific site of modification within the RNA substrate. During assembly, the complex contains NAF1 instead of GAR1/NOLA1. The complex also interacts with TERC, which contains a 3'-terminal domain related to the box H/ACA snoRNAs. Specific interactions with snoRNAs or TERC are mediated by GAR1 and NHP2. Associates with NOLC1/NOPP140. H/ACA snoRNPs interact with the SMN complex, consisting of SMN1 or SMN2, GEMIN2/SIP1, DDX20/GEMIN3, and GEMIN4. This is mediated by interaction between GAR1 and SMN1 or SMN2. The SMN complex may be required for correct assembly of the H/ACA snoRNP complex. Component of the telomerase holoenzyme complex composed of one molecule of TERT, one molecule of WRAP53/TCAB1, two molecules of H/ACA ribonucleoprotein complex subunits DKC1, NOP10, NHP2 and GAR1, and a telomerase RNA template component (TERC). The telomerase holoenzyme complex is associated with TEP1, SMG6/EST1A and POT1.

Its subcellular location is the nucleus. It localises to the nucleolus. The protein localises to the cajal body. Its function is as follows. Required for ribosome biogenesis and telomere maintenance. Part of the H/ACA small nucleolar ribonucleoprotein (H/ACA snoRNP) complex, which catalyzes pseudouridylation of rRNA. This involves the isomerization of uridine such that the ribose is subsequently attached to C5, instead of the normal N1. Each rRNA can contain up to 100 pseudouridine ('psi') residues, which may serve to stabilize the conformation of rRNAs. May also be required for correct processing or intranuclear trafficking of TERC, the RNA component of the telomerase reverse transcriptase (TERT) holoenzyme. This chain is H/ACA ribonucleoprotein complex subunit 2 (NHP2), found in Bos taurus (Bovine).